We begin with the raw amino-acid sequence, 648 residues long: Chaperone protein HtpG (648 aa).

An a; substrate-binding region spans residues 1 to 353; the sequence is MNARVEQLEF…AQDMSLNVSR (353 aa). Residues 354–567 are b; it reads EILQQDRQIK…TFGITPALAR (214 aa). A c region spans residues 568–648; the sequence is IYRATGQDVP…LLADRLTRTL (81 aa).

It belongs to the heat shock protein 90 family. Homodimer.

It localises to the cytoplasm. In terms of biological role, molecular chaperone. Has ATPase activity. In Mycobacterium ulcerans (strain Agy99), this protein is Chaperone protein HtpG.